Here is a 107-residue protein sequence, read N- to C-terminus: Phosphoribosyl-ATP pyrophosphatase (107 aa).

The protein belongs to the PRA-PH family.

It is found in the cytoplasm. It catalyses the reaction 1-(5-phospho-beta-D-ribosyl)-ATP + H2O = 1-(5-phospho-beta-D-ribosyl)-5'-AMP + diphosphate + H(+). Its pathway is amino-acid biosynthesis; L-histidine biosynthesis; L-histidine from 5-phospho-alpha-D-ribose 1-diphosphate: step 2/9. This chain is Phosphoribosyl-ATP pyrophosphatase, found in Azoarcus sp. (strain BH72).